We begin with the raw amino-acid sequence, 642 residues long: Zinc finger protein 14 (642 aa).

A KRAB domain is found at 4-76 (VSFEDVAVNF…MVERLCESRR (73 aa)). A C2H2-type 1 zinc finger spans residues 103-125 (HECSFCGRDFIHHSSLNRHMRSH). The C2H2-type 2; degenerate zinc finger occupies 141 to 163 (CKCKAVGKTFSYHHCFRKHERTH). The C2H2-type 3 zinc-finger motif lies at 169-191 (YECKQCGKAFIYYQPFQRHERTH). Residues 197-217 (YECKQCGKTFIYYQSFQKHAH) form a C2H2-type 4; atypical zinc finger. 15 C2H2-type zinc fingers span residues 223 to 245 (YECK…KRTH), 251 to 273 (YECK…ERTH), 279 to 301 (YKCK…KRTH), 307 to 329 (YECK…VIIH), 335 to 357 (YKCK…ERTH), 363 to 385 (YECK…ERTH), 391 to 413 (YECK…ETTH), 419 to 441 (YECK…ERTH), 447 to 469 (YECK…ERSH), 475 to 497 (YECK…ERTH), 503 to 525 (YECK…EKIH), 531 to 553 (FECK…ERTH), 559 to 581 (YQCK…ERTH), 587 to 609 (YRCK…ERSH), and 615 to 637 (YECK…ERTH).

Belongs to the krueppel C2H2-type zinc-finger protein family.

It localises to the nucleus. Its function is as follows. May be involved in transcriptional regulation. In Homo sapiens (Human), this protein is Zinc finger protein 14 (ZNF14).